The chain runs to 710 residues: Methionine--tRNA ligase (710 aa).

Residues 26-36 (PYANGQIHIGH) carry the 'HIGH' region motif. Residues Cys-157, Cys-160, Cys-170, and Cys-173 each contribute to the Zn(2+) site. A 'KMSKS' region motif is present at residues 347 to 351 (KMSKS). Lys-350 is a binding site for ATP. The tRNA-binding domain maps to 604–710 (DFAKIDLRIA…SGAKPGMRVK (107 aa)).

This sequence belongs to the class-I aminoacyl-tRNA synthetase family. MetG type 1 subfamily. In terms of assembly, homodimer. It depends on Zn(2+) as a cofactor.

It is found in the cytoplasm. It carries out the reaction tRNA(Met) + L-methionine + ATP = L-methionyl-tRNA(Met) + AMP + diphosphate. Functionally, is required not only for elongation of protein synthesis but also for the initiation of all mRNA translation through initiator tRNA(fMet) aminoacylation. The polypeptide is Methionine--tRNA ligase (Paraburkholderia xenovorans (strain LB400)).